The sequence spans 329 residues: GDP-mannose transporter (329 aa).

The Cytoplasmic segment spans residues M1–S11. Residues L12–V32 form a helical membrane-spanning segment. Over T33–G40 the chain is Lumenal. The helical transmembrane segment at V41–I61 threads the bilayer. At S62–W83 the chain is on the cytoplasmic side. The chain crosses the membrane as a helical span at residues F84 to L104. Over S105–P107 the chain is Lumenal. A helical transmembrane segment spans residues I108–F128. The Cytoplasmic segment spans residues G129 to R131. The helical transmembrane segment at V132–Y152 threads the bilayer. The Lumenal segment spans residues G153–N163. Residues F164–F184 traverse the membrane as a helical segment. At M185–D196 the chain is on the cytoplasmic side. The chain crosses the membrane as a helical span at residues F197–T217. At T218–A237 the chain is on the lumenal side. The chain crosses the membrane as a helical span at residues V238–W258. Residues C259–T266 are Cytoplasmic-facing. A helical membrane pass occupies residues T267–F287. Over K288–P290 the chain is Lumenal. The helical transmembrane segment at I291–I311 threads the bilayer. Topologically, residues A312 to S329 are cytoplasmic.

Belongs to the TPT transporter family. SLC35D subfamily. Homooligomer.

It localises to the golgi apparatus membrane. Its subcellular location is the cytoplasmic vesicle membrane. The protein localises to the endoplasmic reticulum membrane. Its function is as follows. Involved in the import of GDP-mannose from the cytoplasm into the Golgi lumen. The chain is GDP-mannose transporter (VIG4) from Komagataella pastoris (Yeast).